The sequence spans 215 residues: UPF0502 protein YceH (215 aa).

Lys80 is subject to N6-acetyllysine.

The protein belongs to the UPF0502 family.

The chain is UPF0502 protein YceH from Shigella flexneri serotype 5b (strain 8401).